Reading from the N-terminus, the 409-residue chain is MNHSPATTFSPHSRYQELKVRNKKSTKKSHKEKYRLKCLRLRRVAKDMVFENAALCDEIARTEDKFIRAKEERRFLLKRLLQLQALSEEEPGTSHNSNVSAGYSVPDMAAMNEGNLDMCYSSVLDDGGSCKKVKKDKREKGKENKSEAMKKPSKKKRVTEGTTRKWVQPIALDPCGRPVFPIVLEGLTVYSLGEIISDRAGFHEKVAIYPVGFCSTRVYVGMKNPDQKCLYTCQIKDGGTGPQFEIVPDDDPQNSIVASSADECHSILLQKISTPLGKRFSTPDLAGAYFFGFTHPTIQNLIQSCPGARKCTGYQWVKFEVCRAGEEQVPRDICESSASVNFEAFQRQSFATINNSTALAGTLDLPEIHASHDYISTYQEIFLSHSQLASGMQHLKSPSNQYSPSRSSE.

A compositionally biased stretch (polar residues) spans 1–13 (MNHSPATTFSPHS). Disordered stretches follow at residues 1–31 (MNHS…KSHK) and 127–162 (GGSC…TEGT). The span at 21 to 31 (RNKKSTKKSHK) shows a compositional bias: basic residues. Residues 136–150 (DKREKGKENKSEAMK) are compositionally biased toward basic and acidic residues. In terms of domain architecture, FYR N-terminal spans 179-238 (VFPIVLEGLTVYSLGEIISDRAGFHEKVAIYPVGFCSTRVYVGMKNPDQKCLYTCQIKDG). One can recognise an FYR C-terminal domain in the interval 239-318 (GTGPQFEIVP…RKCTGYQWVK (80 aa)).

It belongs to the TBRG1 family.

The protein localises to the nucleus. May act as a growth inhibitor. May be involved in maintaining chromosomal stability. The chain is Transforming growth factor beta regulator 1 (tbrg1) from Xenopus tropicalis (Western clawed frog).